Reading from the N-terminus, the 98-residue chain is Small ribosomal subunit protein uS17B (98 aa).

The protein belongs to the universal ribosomal protein uS17 family. Part of the 30S ribosomal subunit.

One of the primary rRNA binding proteins, it binds specifically to the 5'-end of 16S ribosomal RNA. The protein is Small ribosomal subunit protein uS17B of Bacteroides thetaiotaomicron (strain ATCC 29148 / DSM 2079 / JCM 5827 / CCUG 10774 / NCTC 10582 / VPI-5482 / E50).